A 382-amino-acid chain; its full sequence is Alkanesulfonate monooxygenase (382 aa).

It belongs to the SsuD family. In terms of assembly, homotetramer.

The enzyme catalyses an alkanesulfonate + FMNH2 + O2 = an aldehyde + FMN + sulfite + H2O + 2 H(+). Functionally, catalyzes the desulfonation of aliphatic sulfonates. The protein is Alkanesulfonate monooxygenase of Yersinia pestis bv. Antiqua (strain Antiqua).